Reading from the N-terminus, the 584-residue chain is Tricyclene synthase 1e20, chloroplastic (584 aa).

The transit peptide at 1-45 directs the protein to the chloroplast; that stretch reads MIYIWICFYLQTTLLPCSLSTRTKFAICHNTSKLHRAAYKTSRWN. N-linked (GlcNAc...) asparagine glycans are attached at residues Asn-30, Asn-209, and Asn-322. Mg(2+) contacts are provided by Asp-341 and Asp-345. A DDXXD motif motif is present at residues 341–345; the sequence is DDIFD. N-linked (GlcNAc...) asparagine glycans are attached at residues Asn-387 and Asn-468. Mg(2+)-binding residues include Asn-485, Ser-489, and Glu-493. N-linked (GlcNAc...) asparagine glycosylation occurs at Asn-512.

This sequence belongs to the terpene synthase family. Tpsg subfamily. It depends on Mg(2+) as a cofactor. Requires Mn(2+) as cofactor. Accumulates at low levels in flowers; mostly expressed in both upper and lower petal lobes, and, to a lower extent, in tube and stamens.

The protein localises to the plastid. It localises to the chloroplast stroma. It catalyses the reaction (2E)-geranyl diphosphate = tricyclene + diphosphate. The catalysed reaction is (2E)-geranyl diphosphate = beta-myrcene + diphosphate. The protein operates within secondary metabolite biosynthesis; terpenoid biosynthesis. Its function is as follows. May contribute to floral scent emission. This Antirrhinum majus (Garden snapdragon) protein is Tricyclene synthase 1e20, chloroplastic (1e20).